Reading from the N-terminus, the 1182-residue chain is MTGQLVQYGRHRQRRSFARISEVLELPNLIEIQTASYEWFLREGLKEMFTDISPISDFTGNLVLEFIDYSLSEPKYSIDESKERDVTYSAPLRVKVRLQNKETGELKEQEVFMGDFPLMTESGTFIINGAERVIVSQLVRSPSVYYNAKLDKNGKRGFGATVIPNRGAWLELETDAKDIVYVRIDRTRKIPVTVLLRALGFGTDQEIIDLLGDDEYLRNTLEKDNTESTEKALIEIYERLRPGEPPTVENAKSLLVSRFFDPKRYDLANVGRYKMNKKLHLKNRLFGQKLAETLVDPETGEVLAEAGTILDRRNLDRILPHLENGLGYIDAEPTGGVAEGEPFGLQSIKVISPDDPDGERILNIIGNGNIDRSVKHITPADIIASINYFFNLLHEVGTTDDIDHLGNRRLRSVGELLQNQFRIGLSRMERVVKERMSIQDQNAITPQALINIRPVIASLKEFFGSSQLSQFMDQTNPLAELTHKRRLSALGPGGLTRERAGFEVRDVHYSHYGRMCPIETPEGPNIGLINSLSSYAKVNEYGFIEAPYRRVDPETGLVTGDIQYMTADEEDLYVVAQANMPLTEDGHFADEQVLCRFRGQNLSVEPSRVDYMDVSPKQVVSAATACIPFLENDDSNRALMGANMQRQAVPLLQPDSPIVGTGMEYVSAKDSGAAIVAKHPGVVERVTAREILIRRTSDVNGSEVSGDLDRYKLQKYVRSNQGTCYNQKPIIAAGDRVEKGEILADGPSMDMGELALGRNVVVAFMTWDGYNYEDAIIMSERLVKDDVYTSIHIEEYESESRDTKLGPEEITRDIPNVGDDALRNLDDRGIIRIGAEVKDGDILVGKVTPKGVTELTAEERLLHAIFGEKAREVRDTSLRVPNGGDGIILDVKVFDRENGDELSPGVNQMVRVYIVQKRKIHEGDKMAGRHGNKGVISRILPEEDMPYMPDGTPVDIMLNPLGVPSRMNIGQVLELHLGMAAKKLGIKVATPVFDGAREEDVWATIEEAGMDKDAKTRLYDGRTGEPFDNRVSVGVMYMIKLAHMVDDKLHARSTGPYSLVTQQPLGGKAQFGGQRFGEMEVWALEAYGAAYTLQEILTIKSDDTVGRVKAYEAIVKGESVPKAGVPESFRVLIKELQALGMEVKMMSADDEEVEMKDEDDDNIPNATSALEQVVQPTVTEEE.

Residues 1150–1162 (DEEVEMKDEDDDN) are compositionally biased toward acidic residues. The interval 1150 to 1182 (DEEVEMKDEDDDNIPNATSALEQVVQPTVTEEE) is disordered. Positions 1171 to 1182 (EQVVQPTVTEEE) are enriched in low complexity.

It belongs to the RNA polymerase beta chain family. The RNAP catalytic core consists of 2 alpha, 1 beta, 1 beta' and 1 omega subunit. When a sigma factor is associated with the core the holoenzyme is formed, which can initiate transcription.

It catalyses the reaction RNA(n) + a ribonucleoside 5'-triphosphate = RNA(n+1) + diphosphate. Functionally, DNA-dependent RNA polymerase catalyzes the transcription of DNA into RNA using the four ribonucleoside triphosphates as substrates. The protein is DNA-directed RNA polymerase subunit beta of Exiguobacterium sp. (strain ATCC BAA-1283 / AT1b).